Consider the following 455-residue polypeptide: Kynurenine--oxoglutarate transaminase 3 (455 aa).

Position 72 (Gly72) interacts with substrate. Lys117 carries the post-translational modification N6-acetyllysine; alternate. Lys117 bears the N6-succinyllysine; alternate mark. Asn219 lines the substrate pocket. Lys281 carries the post-translational modification N6-(pyridoxal phosphate)lysine. Substrate is bound at residue Arg430.

This sequence belongs to the class-I pyridoxal-phosphate-dependent aminotransferase family. In terms of assembly, homodimer. Requires pyridoxal 5'-phosphate as cofactor. As to expression, widely expressed, with higher expression levels in liver, kidney, heart and neuroendocrine tissues.

The enzyme catalyses L-kynurenine + 2-oxoglutarate = kynurenate + L-glutamate + H2O. The catalysed reaction is L-kynurenine + glyoxylate = kynurenate + glycine + H2O. It carries out the reaction 3-hydroxy-L-kynurenine + glyoxylate = xanthurenate + glycine + H2O. It catalyses the reaction an S-substituted L-cysteine + H2O = a thiol + pyruvate + NH4(+). Its pathway is amino-acid degradation; L-kynurenine degradation; kynurenate from L-kynurenine: step 1/2. With respect to regulation, kynurenine transamination is competitively inhibited by cysteine, glutamine, histidine, methionine, leucine, or phenylalanine. Catalyzes the irreversible transamination of the L-tryptophan metabolite L-kynurenine to form kynurenic acid (KA), an intermediate in the tryptophan catabolic pathway which is also a broad spectrum antagonist of the three ionotropic excitatory amino acid receptors among others. May catalyze the beta-elimination of S-conjugates and Se-conjugates of L-(seleno)cysteine, resulting in the cleavage of the C-S or C-Se bond. Has transaminase activity towards L-kynurenine, tryptophan, phenylalanine, serine, cysteine, methionine, histidine, glutamine and asparagine with glyoxylate as an amino group acceptor (in vitro). Has lower activity with 2-oxoglutarate as amino group acceptor (in vitro). This chain is Kynurenine--oxoglutarate transaminase 3 (Kyat3), found in Mus musculus (Mouse).